Reading from the N-terminus, the 169-residue chain is Crossover junction endodeoxyribonuclease RuvC (169 aa).

Catalysis depends on residues Asp-11, Glu-71, and Asp-143. Asp-11, Glu-71, and Asp-143 together coordinate Mg(2+).

The protein belongs to the RuvC family. Homodimer which binds Holliday junction (HJ) DNA. The HJ becomes 2-fold symmetrical on binding to RuvC with unstacked arms; it has a different conformation from HJ DNA in complex with RuvA. In the full resolvosome a probable DNA-RuvA(4)-RuvB(12)-RuvC(2) complex forms which resolves the HJ. The cofactor is Mg(2+).

It is found in the cytoplasm. The enzyme catalyses Endonucleolytic cleavage at a junction such as a reciprocal single-stranded crossover between two homologous DNA duplexes (Holliday junction).. In terms of biological role, the RuvA-RuvB-RuvC complex processes Holliday junction (HJ) DNA during genetic recombination and DNA repair. Endonuclease that resolves HJ intermediates. Cleaves cruciform DNA by making single-stranded nicks across the HJ at symmetrical positions within the homologous arms, yielding a 5'-phosphate and a 3'-hydroxyl group; requires a central core of homology in the junction. The consensus cleavage sequence is 5'-(A/T)TT(C/G)-3'. Cleavage occurs on the 3'-side of the TT dinucleotide at the point of strand exchange. HJ branch migration catalyzed by RuvA-RuvB allows RuvC to scan DNA until it finds its consensus sequence, where it cleaves and resolves the cruciform DNA. This is Crossover junction endodeoxyribonuclease RuvC from Allorhizobium ampelinum (strain ATCC BAA-846 / DSM 112012 / S4) (Agrobacterium vitis (strain S4)).